The primary structure comprises 1369 residues: Phospholipase D1 (1369 aa).

Disordered regions lie at residues 27–90 and 318–340; these read YSEK…SSWH and ESHS…GRKK. The segment covering 31 to 53 has biased composition (basic and acidic residues); that stretch reads GTGRKDAEDHTPSKITDLEKNVD. A PX domain is found at 208–379; sequence TDLIKVSVLD…NVLYSFLEFS (172 aa). 2 consecutive PLD phosphodiesterase domains span residues 641 to 668 and 941 to 968; these read LFWA…CFGR and EMIY…NERS. The segment covering 1277 to 1289 has biased composition (basic and acidic residues); that stretch reads HETHEKSENDPKN. Residues 1277–1320 are disordered; the sequence is HETHEKSENDPKNPKAGSQGSGNTSASEDSKTEKPKTRTNNGLQ. A compositionally biased stretch (polar residues) spans 1292–1303; the sequence is AGSQGSGNTSAS.

The protein belongs to the phospholipase D family.

The protein resides in the cytoplasm. The catalysed reaction is a 1,2-diacyl-sn-glycero-3-phosphocholine + H2O = a 1,2-diacyl-sn-glycero-3-phosphate + choline + H(+). Its activity is regulated as follows. Activity is slightly stimulated by oleate. Required for meiosis and spore formation. Seems to be involved in the coordinate induction of late meiotic events. This is Phospholipase D1 (pld1) from Schizosaccharomyces pombe (strain 972 / ATCC 24843) (Fission yeast).